The primary structure comprises 819 residues: MNSTNNTDSQNLDPNASEVEKLLDESAEAEEKVDDHTPPSELFILPLNKRPFFPGMAAPLLIEAGPHYEVLTLLAKSSQKHIGLVLTKKEDANTLKVGFNQLHRVGVSARILRIMPIEGGSAQVLLSIEDRIRIVKPIQDKYLKAKVSYHKENKELTEELKAYSISIVSIIKDLLKLNPLFKEELQIFLGHSDFTEPGKLADFSVALTTATREELQEILETTDMHDRIDKALVLLKKELDLSRLQSSINQKIEATITKSQKEFFLKEQLKTIKKELGLEKDDHAVDLEKFMERFNKRDVPQYAMDVIQDEMDKLQTLETSSAEYAVCRNYLDWLTIVPWGIQTKEYHDLKKAESILNKDHYGLEDIKQRILELISVGKLANGMKGSIICLVGPPGVGKTSIGRSIAKVLHRKFFRFSVGGMRDEAEIKGHRRTYIGAMPGKLVQALKQSQIMNPVIMIDEVDKIGSSYHGDPASALLEVLDPEQNKDFLDHYLDVRVDLSNVLFILTANVLDSIPDPLLDRMEVLRLSGYILEEKLQIATKYLVPRARKEMGLSAQNVTFQPEALKHMINNYAREAGVRTLNENIKKVLRKVALKIVQNQEKNLSKKSRFTITPKNLQDYLGKPVFSSDRFYEKTPVGVATGLAWTSLGGATLYIESVQVPSSSGKADMHLTGQAGDVMKESSQIAWTYLHSALERYAPGQPFFEKSQVHIHIPEGATPKDGPSAGITMVTSLLSLLLDVPVLNNLGMTGELTLTGRVLGIGGIREKLIAARRSKLNILIFPEDNRRDYDELPAYLKKGLKVHFVTHYDDVFKIAFPGV.

A compositionally biased stretch (polar residues) spans 1-14 (MNSTNNTDSQNLDP). The disordered stretch occupies residues 1-40 (MNSTNNTDSQNLDPNASEVEKLLDESAEAEEKVDDHTPPS). Residues 18 to 38 (EVEKLLDESAEAEEKVDDHTP) are compositionally biased toward basic and acidic residues. A Lon N-terminal domain is found at 42–239 (LFILPLNKRP…KALVLLKKEL (198 aa)). 392 to 399 (GPPGVGKT) serves as a coordination point for ATP. Residues 634 to 818 (KTPVGVATGL…DDVFKIAFPG (185 aa)) enclose the Lon proteolytic domain. Active-site residues include S724 and K767.

This sequence belongs to the peptidase S16 family. As to quaternary structure, homohexamer. Organized in a ring with a central cavity.

The protein localises to the cytoplasm. It carries out the reaction Hydrolysis of proteins in presence of ATP.. In terms of biological role, ATP-dependent serine protease that mediates the selective degradation of mutant and abnormal proteins as well as certain short-lived regulatory proteins. Required for cellular homeostasis and for survival from DNA damage and developmental changes induced by stress. Degrades polypeptides processively to yield small peptide fragments that are 5 to 10 amino acids long. Binds to DNA in a double-stranded, site-specific manner. The polypeptide is Lon protease (Chlamydia trachomatis serovar D (strain ATCC VR-885 / DSM 19411 / UW-3/Cx)).